The following is a 292-amino-acid chain: 4-hydroxy-tetrahydrodipicolinate synthase (292 aa).

Thr-48 lines the pyruvate pocket. Tyr-136 (proton donor/acceptor) is an active-site residue. Lys-164 (schiff-base intermediate with substrate) is an active-site residue. Ile-204 is a pyruvate binding site.

This sequence belongs to the DapA family. As to quaternary structure, homotetramer; dimer of dimers.

It localises to the cytoplasm. It carries out the reaction L-aspartate 4-semialdehyde + pyruvate = (2S,4S)-4-hydroxy-2,3,4,5-tetrahydrodipicolinate + H2O + H(+). Its pathway is amino-acid biosynthesis; L-lysine biosynthesis via DAP pathway; (S)-tetrahydrodipicolinate from L-aspartate: step 3/4. Catalyzes the condensation of (S)-aspartate-beta-semialdehyde [(S)-ASA] and pyruvate to 4-hydroxy-tetrahydrodipicolinate (HTPA). This is 4-hydroxy-tetrahydrodipicolinate synthase from Acetivibrio thermocellus (strain ATCC 27405 / DSM 1237 / JCM 9322 / NBRC 103400 / NCIMB 10682 / NRRL B-4536 / VPI 7372) (Clostridium thermocellum).